The following is a 201-amino-acid chain: MEITTIDTKSKLKLNKEIFAYTYNEGLVHQAVVTFMNNARSGNSAQKTRSEVSGGGKKPWNQKGTGRARAGTIRSPLWRSGGVTFASKKRDYSQKLNKKMYKRALRSIISELCRTGNLMVVSDFQCDNHKTKDFLKKMNQMEISNALIIMSEVGENEYLGSRNLIDYDICDVTTIDPVSLLRFEKVVVTEAAIKKIEEQLQ.

The tract at residues 42 to 67 is disordered; the sequence is GNSAQKTRSEVSGGGKKPWNQKGTGR.

Belongs to the universal ribosomal protein uL4 family. As to quaternary structure, part of the 50S ribosomal subunit.

Functionally, one of the primary rRNA binding proteins, this protein initially binds near the 5'-end of the 23S rRNA. It is important during the early stages of 50S assembly. It makes multiple contacts with different domains of the 23S rRNA in the assembled 50S subunit and ribosome. Forms part of the polypeptide exit tunnel. In Legionella pneumophila (strain Paris), this protein is Large ribosomal subunit protein uL4.